The following is a 707-amino-acid chain: Ribosomal RNA large subunit methyltransferase K/L (707 aa).

Positions 44–155 (VIYNLCLWSR…NDILTVSFDL (112 aa)) constitute a THUMP domain.

It belongs to the methyltransferase superfamily. RlmKL family.

It localises to the cytoplasm. It carries out the reaction guanosine(2445) in 23S rRNA + S-adenosyl-L-methionine = N(2)-methylguanosine(2445) in 23S rRNA + S-adenosyl-L-homocysteine + H(+). It catalyses the reaction guanosine(2069) in 23S rRNA + S-adenosyl-L-methionine = N(2)-methylguanosine(2069) in 23S rRNA + S-adenosyl-L-homocysteine + H(+). Specifically methylates the guanine in position 2445 (m2G2445) and the guanine in position 2069 (m7G2069) of 23S rRNA. The polypeptide is Ribosomal RNA large subunit methyltransferase K/L (Legionella pneumophila (strain Lens)).